Consider the following 446-residue polypeptide: Trigger factor (446 aa).

The PPIase FKBP-type domain maps to 161-246 (GDRLTIDFKG…VSKVERSELP (86 aa)). The segment at 422–446 (VSYEDAVKPRTAPAEQAEDGEQSAE) is disordered. Over residues 437–446 (QAEDGEQSAE) the composition is skewed to acidic residues.

It belongs to the FKBP-type PPIase family. Tig subfamily.

It is found in the cytoplasm. It catalyses the reaction [protein]-peptidylproline (omega=180) = [protein]-peptidylproline (omega=0). Functionally, involved in protein export. Acts as a chaperone by maintaining the newly synthesized protein in an open conformation. Functions as a peptidyl-prolyl cis-trans isomerase. The chain is Trigger factor from Hahella chejuensis (strain KCTC 2396).